A 538-amino-acid polypeptide reads, in one-letter code: Protein phosphatase EYA2 (538 aa).

The segment covering 209-230 (HNVPNQSSESLAGEYNTHNGPS) has biased composition (polar residues). The interval 209–263 (HNVPNQSSESLAGEYNTHNGPSTPAKEGDTDRPHRASDGKLRGRSKRSSDPSPAG) is disordered. Positions 234–249 (KEGDTDRPHRASDGKL) are enriched in basic and acidic residues. The active-site Nucleophile is the D274. Mg(2+) is bound by residues D274, D276, and D502. Catalysis depends on D276, which acts as the Proton donor.

The protein belongs to the HAD-like hydrolase superfamily. EYA family. In terms of assembly, interacts with DACH2 and SIX1, and probably with SIX2, SIX4 and SIX5. Interacts with CAPN8. Interacts with GNAZ and GNAI2; this precludes interaction with SIX1. The cofactor is Mg(2+). In terms of tissue distribution, highest expression in muscle with lower levels in kidney, placenta, pancreas, brain and heart.

The protein localises to the cytoplasm. Its subcellular location is the nucleus. It carries out the reaction O-phospho-L-tyrosyl-[protein] + H2O = L-tyrosyl-[protein] + phosphate. Functions both as protein phosphatase and as transcriptional coactivator for SIX1, and probably also for SIX2, SIX4 and SIX5. Tyrosine phosphatase that dephosphorylates 'Tyr-142' of histone H2AX (H2AXY142ph) and promotes efficient DNA repair via the recruitment of DNA repair complexes containing MDC1. 'Tyr-142' phosphorylation of histone H2AX plays a central role in DNA repair and acts as a mark that distinguishes between apoptotic and repair responses to genotoxic stress. Its function as histone phosphatase may contribute to its function in transcription regulation during organogenesis. Plays an important role in hypaxial muscle development together with SIX1 and DACH2; in this it is functionally redundant with EYA1. The polypeptide is Protein phosphatase EYA2 (EYA2) (Homo sapiens (Human)).